A 603-amino-acid chain; its full sequence is NADH-ubiquinone oxidoreductase chain 5 (603 aa).

Helical transmembrane passes span 4–24 (YATM…TTFI), 38–58 (SIVA…LCLD), 87–107 (MMFI…SLWY), 114–134 (INQF…LVTA), 140–160 (LFIG…WWYA), 171–191 (AILY…WFLL), 210–230 (LIPL…LGLH), 241–261 (TPVS…FLLI), 272–292 (LAQT…AVCA), 301–320 (IVAF…IGIG), 325–347 (AFLH…GSII), 370–390 (STSL…TGFY), 407–429 (WALS…MILL), 457–477 (LTIG…PTSV), 482–502 (IPLY…LTAL), 537–557 (IPYL…DLIW), and 582–602 (GLIK…LLLI).

It belongs to the complex I subunit 5 family. Core subunit of respiratory chain NADH dehydrogenase (Complex I) which is composed of 45 different subunits.

The protein localises to the mitochondrion inner membrane. It catalyses the reaction a ubiquinone + NADH + 5 H(+)(in) = a ubiquinol + NAD(+) + 4 H(+)(out). Its function is as follows. Core subunit of the mitochondrial membrane respiratory chain NADH dehydrogenase (Complex I) which catalyzes electron transfer from NADH through the respiratory chain, using ubiquinone as an electron acceptor. Essential for the catalytic activity and assembly of complex I. The chain is NADH-ubiquinone oxidoreductase chain 5 (MT-ND5) from Gorilla gorilla gorilla (Western lowland gorilla).